The sequence spans 129 residues: Small ribosomal subunit protein uS11 (129 aa).

The protein belongs to the universal ribosomal protein uS11 family. As to quaternary structure, part of the 30S ribosomal subunit. Interacts with proteins S7 and S18. Binds to IF-3.

Located on the platform of the 30S subunit, it bridges several disparate RNA helices of the 16S rRNA. Forms part of the Shine-Dalgarno cleft in the 70S ribosome. This is Small ribosomal subunit protein uS11 from Buchnera aphidicola subsp. Baizongia pistaciae (strain Bp).